The sequence spans 173 residues: Translationally-controlled tumor protein homolog (173 aa).

Residues 1–173 form the TCTP domain; it reads MIIFKDMITG…FKHGLEEEKV (173 aa).

It belongs to the TCTP family. As to expression, expressed by the venom gland.

The protein resides in the secreted. Functionally, venom protein that causes edema, enhances vascular permeability and is likely related to the inflammatory activity of the venom. This is Translationally-controlled tumor protein homolog from Grammostola rosea (Chilean rose tarantula).